The primary structure comprises 70 residues: Large ribosomal subunit protein uL29 (70 aa).

The protein belongs to the universal ribosomal protein uL29 family.

This chain is Large ribosomal subunit protein uL29, found in Rickettsia bellii (strain OSU 85-389).